The primary structure comprises 274 residues: 2,3,4,5-tetrahydropyridine-2,6-dicarboxylate N-succinyltransferase (274 aa).

Residues Arg-106 and Asp-143 each coordinate substrate.

It belongs to the transferase hexapeptide repeat family. As to quaternary structure, homotrimer.

It localises to the cytoplasm. The enzyme catalyses (S)-2,3,4,5-tetrahydrodipicolinate + succinyl-CoA + H2O = (S)-2-succinylamino-6-oxoheptanedioate + CoA. It functions in the pathway amino-acid biosynthesis; L-lysine biosynthesis via DAP pathway; LL-2,6-diaminopimelate from (S)-tetrahydrodipicolinate (succinylase route): step 1/3. The polypeptide is 2,3,4,5-tetrahydropyridine-2,6-dicarboxylate N-succinyltransferase (Herminiimonas arsenicoxydans).